The chain runs to 104 residues: Antitoxin HigA-2 (104 aa).

Residues 45-98 form the HTH cro/C1-type domain; that stretch reads IVSIREQFNMSRGVFARLLHTSSRTLENWEQGRSVPNGQAVTLLKLVQRHPETL. Positions 56–75 form a DNA-binding region, H-T-H motif; sequence RGVFARLLHTSSRTLENWEQ.

Antitoxin component of a type II toxin-antitoxin (TA) system that counteracts the effect of the HigB-2 toxin. Binds to its own promoter and regulates transcription of the higB-2/higA-2 operon. The polypeptide is Antitoxin HigA-2 (higA-2) (Vibrio cholerae serotype O1 (strain ATCC 39315 / El Tor Inaba N16961)).